A 129-amino-acid chain; its full sequence is Prefoldin subunit 6 (129 aa).

Position 2 is an N-acetylalanine (alanine 2). An N6-acetyllysine modification is found at lysine 21. An N6-acetyllysine; alternate modification is found at lysine 66. A Glycyl lysine isopeptide (Lys-Gly) (interchain with G-Cter in SUMO1); alternate cross-link involves residue lysine 66. A Glycyl lysine isopeptide (Lys-Gly) (interchain with G-Cter in SUMO2); alternate cross-link involves residue lysine 66.

This sequence belongs to the prefoldin subunit beta family. As to quaternary structure, heterohexamer of two PFD-alpha type and four PFD-beta type subunits. Component of the PAQosome complex which is responsible for the biogenesis of several protein complexes and which consists of R2TP complex members RUVBL1, RUVBL2, RPAP3 and PIH1D1, URI complex members PFDN2, PFDN6, PDRG1, UXT and URI1 as well as ASDURF, POLR2E and DNAAF10/WDR92.

Its function is as follows. Binds specifically to cytosolic chaperonin (c-CPN) and transfers target proteins to it. Binds to nascent polypeptide chain and promotes folding in an environment in which there are many competing pathways for nonnative proteins. The chain is Prefoldin subunit 6 (PFDN6) from Canis lupus familiaris (Dog).